The chain runs to 454 residues: O-phospho-L-seryl-tRNA:Cys-tRNA synthase 2 (454 aa).

Pyridoxal 5'-phosphate is bound by residues 146-147 (AR), N251, and 274-276 (SGH). N6-(pyridoxal phosphate)lysine is present on K277.

It belongs to the SepCysS family. Homodimer. Interacts with SepRS. Pyridoxal 5'-phosphate serves as cofactor.

The catalysed reaction is O-phospho-L-seryl-tRNA(Cys) + hydrogen sulfide + H(+) = L-cysteinyl-tRNA(Cys) + phosphate. In terms of biological role, converts O-phospho-L-seryl-tRNA(Cys) (Sep-tRNA(Cys)) to L-cysteinyl-tRNA(Cys) (Cys-tRNA(Cys)). This chain is O-phospho-L-seryl-tRNA:Cys-tRNA synthase 2, found in Methanoregula boonei (strain DSM 21154 / JCM 14090 / 6A8).